The sequence spans 559 residues: Dihydroxy-acid dehydratase (559 aa).

Position 52 (Cys52) interacts with [2Fe-2S] cluster. Position 84 (Asp84) interacts with Mg(2+). [2Fe-2S] cluster is bound at residue Cys125. Residues Asp126 and Lys127 each contribute to the Mg(2+) site. Lys127 is subject to N6-carboxylysine. A [2Fe-2S] cluster-binding site is contributed by Cys197. Position 447 (Glu447) interacts with Mg(2+). Ser473 functions as the Proton acceptor in the catalytic mechanism.

It belongs to the IlvD/Edd family. Homodimer. Requires [2Fe-2S] cluster as cofactor. Mg(2+) is required as a cofactor.

It catalyses the reaction (2R)-2,3-dihydroxy-3-methylbutanoate = 3-methyl-2-oxobutanoate + H2O. The catalysed reaction is (2R,3R)-2,3-dihydroxy-3-methylpentanoate = (S)-3-methyl-2-oxopentanoate + H2O. Its pathway is amino-acid biosynthesis; L-isoleucine biosynthesis; L-isoleucine from 2-oxobutanoate: step 3/4. It participates in amino-acid biosynthesis; L-valine biosynthesis; L-valine from pyruvate: step 3/4. Its function is as follows. Functions in the biosynthesis of branched-chain amino acids. Catalyzes the dehydration of (2R,3R)-2,3-dihydroxy-3-methylpentanoate (2,3-dihydroxy-3-methylvalerate) into 2-oxo-3-methylpentanoate (2-oxo-3-methylvalerate) and of (2R)-2,3-dihydroxy-3-methylbutanoate (2,3-dihydroxyisovalerate) into 2-oxo-3-methylbutanoate (2-oxoisovalerate), the penultimate precursor to L-isoleucine and L-valine, respectively. In Roseiflexus castenholzii (strain DSM 13941 / HLO8), this protein is Dihydroxy-acid dehydratase.